Consider the following 255-residue polypeptide: 5'-nucleotidase SurE (255 aa).

Residues Asp8, Asp9, Ser40, and Asn93 each coordinate a divalent metal cation.

The protein belongs to the SurE nucleotidase family. It depends on a divalent metal cation as a cofactor.

Its subcellular location is the cytoplasm. It carries out the reaction a ribonucleoside 5'-phosphate + H2O = a ribonucleoside + phosphate. Functionally, nucleotidase that shows phosphatase activity on nucleoside 5'-monophosphates. The sequence is that of 5'-nucleotidase SurE from Azorhizobium caulinodans (strain ATCC 43989 / DSM 5975 / JCM 20966 / LMG 6465 / NBRC 14845 / NCIMB 13405 / ORS 571).